Consider the following 150-residue polypeptide: 3-hydroxyacyl-[acyl-carrier-protein] dehydratase FabZ (150 aa).

Histidine 47 is a catalytic residue.

Belongs to the thioester dehydratase family. FabZ subfamily.

The protein resides in the cytoplasm. It carries out the reaction a (3R)-hydroxyacyl-[ACP] = a (2E)-enoyl-[ACP] + H2O. In terms of biological role, involved in unsaturated fatty acids biosynthesis. Catalyzes the dehydration of short chain beta-hydroxyacyl-ACPs and long chain saturated and unsaturated beta-hydroxyacyl-ACPs. The protein is 3-hydroxyacyl-[acyl-carrier-protein] dehydratase FabZ of Verminephrobacter eiseniae (strain EF01-2).